A 549-amino-acid polypeptide reads, in one-letter code: Probable protein kinase UbiB (549 aa).

Residues 123-501 (DFNETPLASA…QQQAHKSNYL (379 aa)) form the Protein kinase domain. Residues 129 to 137 (LASASISQV) and Lys-152 each bind ATP. Asp-287 serves as the catalytic Proton acceptor. 2 helical membrane-spanning segments follow: residues 498–518 (SNYLLITSAILLICGTLLFNQ) and 520–540 (ATLLSPYVCLISGAVLWIIGW).

This sequence belongs to the ABC1 family. UbiB subfamily.

It localises to the cell inner membrane. Its pathway is cofactor biosynthesis; ubiquinone biosynthesis [regulation]. In terms of biological role, is probably a protein kinase regulator of UbiI activity which is involved in aerobic coenzyme Q (ubiquinone) biosynthesis. The sequence is that of Probable protein kinase UbiB from Shewanella oneidensis (strain ATCC 700550 / JCM 31522 / CIP 106686 / LMG 19005 / NCIMB 14063 / MR-1).